The sequence spans 344 residues: Cell division protein ZipA (344 aa).

Over 1–6 (MEDLQL) the chain is Periplasmic. Residues 7–27 (VLFVLGAIAIVAVLVHGFWSI) traverse the membrane as a helical segment. Residues 28-344 (RRQQPKSLKD…DYLHRIRANA (317 aa)) are Cytoplasmic-facing. Disordered regions lie at residues 75–94 (VRKA…PYLK) and 108–139 (QFKQ…ASRQ).

This sequence belongs to the ZipA family. In terms of assembly, interacts with FtsZ via their C-terminal domains.

It is found in the cell inner membrane. Its function is as follows. Essential cell division protein that stabilizes the FtsZ protofilaments by cross-linking them and that serves as a cytoplasmic membrane anchor for the Z ring. Also required for the recruitment to the septal ring of downstream cell division proteins. The protein is Cell division protein ZipA of Shewanella oneidensis (strain ATCC 700550 / JCM 31522 / CIP 106686 / LMG 19005 / NCIMB 14063 / MR-1).